The primary structure comprises 524 residues: mRNA cap guanine-N(7) methyltransferase (524 aa).

Positions 1 to 155 (MSDKEAGVAS…DKKRAHDEAE (155 aa)) are disordered. Residues 19-40 (NKDEVDVKNTEEHSKQESKSDI) show a composition bias toward basic and acidic residues. Polar residues predominate over residues 68–77 (NNKVISSVYN). Basic and acidic residues predominate over residues 90-99 (KTTDKYDKYG). Residues 100-112 (SRSTPIATPTAPV) show a composition bias toward polar residues. Residues 214–522 (SPIYKLRNFN…FYIGFVFEKL (309 aa)) form the mRNA cap 0 methyltransferase domain. 223-224 (NN) provides a ligand contact to mRNA. Residues lysine 227, cysteine 251, aspartate 273, aspartate 319, glutamine 349, and tyrosine 354 each coordinate S-adenosyl-L-methionine.

This sequence belongs to the class I-like SAM-binding methyltransferase superfamily. mRNA cap 0 methyltransferase family.

It is found in the nucleus. It catalyses the reaction a 5'-end (5'-triphosphoguanosine)-ribonucleoside in mRNA + S-adenosyl-L-methionine = a 5'-end (N(7)-methyl 5'-triphosphoguanosine)-ribonucleoside in mRNA + S-adenosyl-L-homocysteine. Functionally, responsible for methylating the 5'-cap structure of mRNAs. This chain is mRNA cap guanine-N(7) methyltransferase (ABD1), found in Debaryomyces hansenii (strain ATCC 36239 / CBS 767 / BCRC 21394 / JCM 1990 / NBRC 0083 / IGC 2968) (Yeast).